The following is a 452-amino-acid chain: GTPase Der (452 aa).

2 consecutive EngA-type G domains span residues P4 to A169 and I177 to R352. GTP-binding positions include G10–S17, D57–L61, N120–E123, G183–S190, D230–I234, and N295–D298. Residues R353–P438 form the KH-like domain.

Belongs to the TRAFAC class TrmE-Era-EngA-EngB-Septin-like GTPase superfamily. EngA (Der) GTPase family. Associates with the 50S ribosomal subunit.

GTPase that plays an essential role in the late steps of ribosome biogenesis. In Microcystis aeruginosa (strain NIES-843 / IAM M-2473), this protein is GTPase Der.